Reading from the N-terminus, the 732-residue chain is Translation initiation factor IF-2 (732 aa).

Residues 40-147 (PEVVEKLDHT…QQEQPMKKEK (108 aa)) form a disordered region. The span at 42–67 (VVEKLDHTYNKKNERPQASAPKEKQK) shows a compositional bias: basic and acidic residues. A compositionally biased stretch (basic residues) spans 90–103 (KVPKKKSANKKKEG). Residues 104 to 117 (KKHDLQLQQQEKKI) are compositionally biased toward basic and acidic residues. Positions 118 to 129 (FHQQKKKIKGKA) are enriched in basic residues. The tr-type G domain occupies 233–402 (ERPPVVTIMG…LLVSEMEELK (170 aa)). Residues 242–249 (GHVDHGKT) form a G1 region. 242 to 249 (GHVDHGKT) lines the GTP pocket. Residues 267 to 271 (GITQH) form a G2 region. The interval 288-291 (DTPG) is G3. GTP-binding positions include 288–292 (DTPGH) and 342–345 (NKMD). The G4 stretch occupies residues 342–345 (NKMD). Residues 378–380 (SAK) form a G5 region.

This sequence belongs to the TRAFAC class translation factor GTPase superfamily. Classic translation factor GTPase family. IF-2 subfamily.

Its subcellular location is the cytoplasm. One of the essential components for the initiation of protein synthesis. Protects formylmethionyl-tRNA from spontaneous hydrolysis and promotes its binding to the 30S ribosomal subunits. Also involved in the hydrolysis of GTP during the formation of the 70S ribosomal complex. In Geobacillus sp. (strain WCH70), this protein is Translation initiation factor IF-2.